The following is a 253-amino-acid chain: Uracil-DNA glycosylase (253 aa).

D79 acts as the Proton acceptor in catalysis.

Belongs to the uracil-DNA glycosylase (UDG) superfamily. UNG family.

The protein localises to the cytoplasm. The catalysed reaction is Hydrolyzes single-stranded DNA or mismatched double-stranded DNA and polynucleotides, releasing free uracil.. In terms of biological role, excises uracil residues from the DNA which can arise as a result of misincorporation of dUMP residues by DNA polymerase or due to deamination of cytosine. The protein is Uracil-DNA glycosylase of Xylella fastidiosa (strain M12).